The following is a 953-amino-acid chain: Homeobox protein LUMINIDEPENDENS (953 aa).

Positions 63–123 form a DNA-binding region, homeobox; that stretch reads KIGKRPRDLL…VTQKTRVRKQ (61 aa). The disordered stretch occupies residues 404–430; the sequence is EQPGQKAAGKSPQTVRIGTSGRSRPMS. The segment covering 414–425 has biased composition (polar residues); the sequence is SPQTVRIGTSGR. 5 consecutive repeat copies span residues 498 to 502, 507 to 511, 516 to 520, 525 to 529, and 534 to 538. Residues 498–538 are 5 X 5 AA repeats of Q-P-V-N-G; sequence QPVNGFSTIQPVNGPSAVQPVNGPLAVQPVNGPSALQPVNG. Disordered regions lie at residues 606–668, 733–763, and 861–953; these read NSKE…EPQD, APNSSSSSNKQVEERVEVSLPSPTPSTNPGM, and VGQM…KRWR. Residues 608–623 are compositionally biased toward basic and acidic residues; sequence KEADVQRNRNRRERET. Residues 651–661 are compositionally biased toward low complexity; it reads PEIPSQQPPEE. A compositionally biased stretch (polar residues) spans 733-742; the sequence is APNSSSSSNK. The segment covering 869-884 has biased composition (low complexity); that stretch reads SSSWRSQQSQNSYYSH. 2 stretches are compositionally biased toward polar residues: residues 888-934 and 942-953; these read EIAS…QQQA and THPYWNQNKRWR.

As to quaternary structure, interacts with SUF4. In terms of tissue distribution, expressed in shoot apex, root apex, leaf primordia and floral buds.

The protein resides in the nucleus. Functionally, seems to play a role in the regulation of flowering time in the autonomous flowering pathway by repressing FLOWERING LOCUS C expression. This chain is Homeobox protein LUMINIDEPENDENS (LD), found in Arabidopsis thaliana (Mouse-ear cress).